Here is a 478-residue protein sequence, read N- to C-terminus: TFIIA-alpha and beta-like factor (478 aa).

The disordered stretch occupies residues 309–427; the sequence is VKQPRNIEEP…SGDDVSEQDV (119 aa). Residues 390–401 are compositionally biased toward polar residues; the sequence is SISNEDSATNSS. The segment covering 411-427 has biased composition (acidic residues); it reads VEEDPLNSGDDVSEQDV.

Belongs to the TFIIA subunit 1 family. Testis specific. Detected in adult testis mostly in round and elongating spermatids (at protein level). Detected in testis.

The protein resides in the nucleus. In terms of biological role, may function as a testis specific transcription factor. Binds DNA in conjunction with GTF2A2 and TBP (the TATA-binding protein) and together with GTF2A2, allows mRNA transcription. This Homo sapiens (Human) protein is TFIIA-alpha and beta-like factor (GTF2A1L).